The sequence spans 366 residues: IgG receptor FcRn large subunit p51 (366 aa).

A signal peptide spans 1-22; the sequence is MGMSQPGVLLSLLLVLLPQTWG. Positions 23-111 are alpha-1; the sequence is AEPRLPLMYH…RTLENQINGT (89 aa). The Extracellular portion of the chain corresponds to 23 to 298; sequence AEPRLPLMYH…VDLDSPARSS (276 aa). Residues Asn-109, Asn-126, Asn-150, and Asn-247 are each glycosylated (N-linked (GlcNAc...) asparagine). The tract at residues 112 to 201 is alpha-2; sequence FTLQGLLGCE…ERGRQNLEWK (90 aa). Intrachain disulfides connect Cys-120–Cys-183 and Cys-222–Cys-276. Residues 202 to 291 are alpha-3; that stretch reads EPPSMRLKAR…GLAQPLTVDL (90 aa). The region spanning 203–290 is the Ig-like C1-type domain; that stretch reads PPSMRLKARP…EGLAQPLTVD (88 aa). The connecting peptide stretch occupies residues 293–298; sequence SPARSS. The helical transmembrane segment at 299 to 322 threads the bilayer; the sequence is VPVVGIILGLLLVVVAIAGGVLLW. The Cytoplasmic portion of the chain corresponds to 323 to 366; that stretch reads NRMRSGLPAPWLSLSGDDSGDLLPGGNLPPEAEPQGVNAFPATS. At Ser-335 the chain carries Phosphoserine. The segment at 344 to 366 is disordered; the sequence is LLPGGNLPPEAEPQGVNAFPATS.

It belongs to the immunoglobulin superfamily. FcRn complex consists of two subunits: p51, and p14 which is equivalent to beta-2-microglobulin. It forms an MHC class I-like heterodimer. Interacts with albumin/ALB; this interaction regulates ALB homeostasis. Intestinal epithelium.

The protein localises to the cell membrane. It localises to the endosome membrane. Cell surface receptor that transfers passive humoral immunity from the mother to the newborn. Binds to the Fc region of monomeric immunoglobulin gamma and mediates its selective uptake from milk. IgG in the milk is bound at the apical surface of the intestinal epithelium. The resultant FcRn-IgG complexes are transcytosed across the intestinal epithelium and IgG is released from FcRn into blood or tissue fluids. Throughout life, contributes to effective humoral immunity by recycling IgG and extending its half-life in the circulation. Mechanistically, monomeric IgG binding to FcRn in acidic endosomes of endothelial and hematopoietic cells recycles IgG to the cell surface where it is released into the circulation. In addition of IgG, regulates homeostasis of the other most abundant circulating protein albumin/ALB. This chain is IgG receptor FcRn large subunit p51 (Fcgrt), found in Rattus norvegicus (Rat).